The following is a 366-amino-acid chain: Mitogen-activated protein kinase sakA (366 aa).

The Protein kinase domain maps to Tyr-20–Leu-299. ATP contacts are provided by residues Val-26 to Val-34 and Lys-49. The Proton acceptor role is filled by Asp-141. Thr-171 is subject to Phosphothreonine. The short motif at Thr-171–Tyr-173 is the TXY element. Phosphotyrosine is present on Tyr-173.

It belongs to the protein kinase superfamily. Ser/Thr protein kinase family. MAP kinase subfamily. HOG1 sub-subfamily. Interacts with the AGC kinase ypkA. Interacts with sakA upon osmotic and cell wall stresses. Mg(2+) serves as cofactor. Dually phosphorylated on Thr-171 and Tyr-173, which activates the enzyme. Environmental stresses such as high temperature, osmotic stress, cold stress or ethanol stress modulate the activation of sakA via phosphorylation.

The protein resides in the cytoplasm. Its subcellular location is the nucleus. The enzyme catalyses L-seryl-[protein] + ATP = O-phospho-L-seryl-[protein] + ADP + H(+). It catalyses the reaction L-threonyl-[protein] + ATP = O-phospho-L-threonyl-[protein] + ADP + H(+). With respect to regulation, activated by tyrosine and threonine phosphorylation. Deactivated by protein phosphatase 2C homolog 2 ptcB. In terms of biological role, proline-directed serine/threonine-protein kinase involved in a signal transduction pathway that is activated by changes in the osmolarity of the extracellular environment. Controls osmotic regulation of transcription of target genes. Involved in environmental stress response. With mpkC, plays a redundant or cooperative role in the conidial stress resistance. Also plays a supportive role in osmotic stress adaptation when sakA is deficient. Involved in paradoxical growth, the cell wall integrity (CWI) pathway and biofilm formation. Also collaborates with mpkC to allow ful virulence in a neutropenic murine model ofinvasive pulmonary aspergillosis. MpkC and sakA have both independent and collaborative functions during the transcriptional response to transient osmotic stress and sakA not only seems to modulate pathways involved in nucleotide, fatty acid, nitrogen and organic acid biosynthesis but is also important for the activation of genes involved in mitochondrial and endoplasmic reticulum functions. In Aspergillus fumigatus (strain ATCC MYA-4609 / CBS 101355 / FGSC A1100 / Af293) (Neosartorya fumigata), this protein is Mitogen-activated protein kinase sakA.